Reading from the N-terminus, the 146-residue chain is Small ribosomal subunit protein bS16 (146 aa).

A compositionally biased stretch (basic and acidic residues) spans 84–102 (SHLEAQKAAVERLGRRKDY). A disordered region spans residues 84 to 146 (SHLEAQKAAV…DAPAAEATTE (63 aa)). Over residues 110–119 (APKAAPVAEA) the composition is skewed to low complexity. A compositionally biased stretch (acidic residues) spans 120 to 130 (PAEEAPAEEPA). The span at 131-146 (AEASTDDAPAAEATTE) shows a compositional bias: low complexity.

The protein belongs to the bacterial ribosomal protein bS16 family.

This Rhodopirellula baltica (strain DSM 10527 / NCIMB 13988 / SH1) protein is Small ribosomal subunit protein bS16.